Consider the following 207-residue polypeptide: Small ribosomal subunit protein uS4 (207 aa).

A disordered region spans residues 31 to 55 (KCKLDSKPGQHGRTSGARTSDYGTQ). Over residues 42–53 (GRTSGARTSDYG) the composition is skewed to polar residues. The 64-residue stretch at 97 to 160 (SRLDNVVYRM…KKQARIVEAL (64 aa)) folds into the S4 RNA-binding domain.

This sequence belongs to the universal ribosomal protein uS4 family. In terms of assembly, part of the 30S ribosomal subunit. Contacts protein S5. The interaction surface between S4 and S5 is involved in control of translational fidelity.

In terms of biological role, one of the primary rRNA binding proteins, it binds directly to 16S rRNA where it nucleates assembly of the body of the 30S subunit. With S5 and S12 plays an important role in translational accuracy. This chain is Small ribosomal subunit protein uS4, found in Burkholderia ambifaria (strain MC40-6).